We begin with the raw amino-acid sequence, 477 residues long: Probable cytosolic Fe-S cluster assembly factor GK14772 (477 aa).

Residues cysteine 23, cysteine 69, cysteine 72, cysteine 75, cysteine 188, cysteine 244, cysteine 396, and cysteine 400 each coordinate [4Fe-4S] cluster.

This sequence belongs to the NARF family.

Functionally, component of the cytosolic iron-sulfur (Fe/S) protein assembly machinery. Required for maturation of extramitochondrial Fe/S proteins. The polypeptide is Probable cytosolic Fe-S cluster assembly factor GK14772 (Drosophila willistoni (Fruit fly)).